The sequence spans 177 residues: Nucleoside triphosphate/diphosphate phosphatase (177 aa).

Residue Arg23 is the Proton donor of the active site. 6 residues coordinate Mg(2+): Asn87, Asp103, Asp105, Asp107, Asp120, and Glu123.

The protein belongs to the Ntdp family. Mg(2+) serves as cofactor.

It catalyses the reaction a ribonucleoside 5'-triphosphate + H2O = a ribonucleoside 5'-diphosphate + phosphate + H(+). It carries out the reaction a ribonucleoside 5'-diphosphate + H2O = a ribonucleoside 5'-phosphate + phosphate + H(+). Has nucleoside phosphatase activity towards nucleoside triphosphates and nucleoside diphosphates. This is Nucleoside triphosphate/diphosphate phosphatase from Streptococcus suis (strain 98HAH33).